A 294-amino-acid chain; its full sequence is Putative pyruvate, phosphate dikinase regulatory protein (294 aa).

156–163 (GVSRSGKT) provides a ligand contact to ADP.

It belongs to the pyruvate, phosphate/water dikinase regulatory protein family. PDRP subfamily.

It carries out the reaction N(tele)-phospho-L-histidyl/L-threonyl-[pyruvate, phosphate dikinase] + ADP = N(tele)-phospho-L-histidyl/O-phospho-L-threonyl-[pyruvate, phosphate dikinase] + AMP + H(+). It catalyses the reaction N(tele)-phospho-L-histidyl/O-phospho-L-threonyl-[pyruvate, phosphate dikinase] + phosphate + H(+) = N(tele)-phospho-L-histidyl/L-threonyl-[pyruvate, phosphate dikinase] + diphosphate. Its function is as follows. Bifunctional serine/threonine kinase and phosphorylase involved in the regulation of the pyruvate, phosphate dikinase (PPDK) by catalyzing its phosphorylation/dephosphorylation. This chain is Putative pyruvate, phosphate dikinase regulatory protein, found in Cutibacterium acnes (strain DSM 16379 / KPA171202) (Propionibacterium acnes).